Consider the following 927-residue polypeptide: Nonsense-mediated mRNA decay factor SMG8 (927 aa).

Disordered stretches follow at residues 543–581 (NTGK…NTAS), 611–636 (QARS…DTEN), and 643–662 (QEPA…AVST). A compositionally biased stretch (acidic residues) spans 551–566 (QDEDAGEDEAEEEEGQ). The span at 613-633 (RSEQLSNSEQNTTRSGSSSVD) shows a compositional bias: polar residues. Residues 644 to 654 (EPAKKEAREDV) show a composition bias toward basic and acidic residues.

The protein belongs to the SMG8 family.

Involved in nonsense-mediated decay (NMD) of mRNAs containing premature stop codons. Probable component of kinase complex containing nonC and recruited to stalled ribosomes. In Drosophila sechellia (Fruit fly), this protein is Nonsense-mediated mRNA decay factor SMG8.